A 70-amino-acid chain; its full sequence is MTMNVLEAGKWKSIVPAPGEGLLAVLHMMVFTDALHRERSVKWQAGVCYNGGKDFAVSLARPKAAEGIAD.

In terms of tissue distribution, expressed in many tissues, with highest expression in prostate and testis. Reduced expression in esophageal carcinomas.

Candidate tumor suppressor. This chain is Deleted in esophageal cancer 1, found in Homo sapiens (Human).